We begin with the raw amino-acid sequence, 109 residues long: MSQGVEFNRLMLEMRSMQMEAMAKAKPVQAPAEAGAPSFSEMLSQAVGKVNETQQASTAMANAFEVGQSGVDLTDVMIASQKASVSFQAMTQVRNKLVQAYQDIMQMPV.

Belongs to the FliE family.

It localises to the bacterial flagellum basal body. This Pseudomonas paraeruginosa (strain DSM 24068 / PA7) (Pseudomonas aeruginosa (strain PA7)) protein is Flagellar hook-basal body complex protein FliE.